Here is a 236-residue protein sequence, read N- to C-terminus: Hydroxyacylglutathione hydrolase (236 aa).

The Zn(2+) site is built by His52, His54, Asp56, His57, His108, Asp125, and His163.

This sequence belongs to the metallo-beta-lactamase superfamily. Glyoxalase II family. As to quaternary structure, monomer. The cofactor is Zn(2+).

It catalyses the reaction an S-(2-hydroxyacyl)glutathione + H2O = a 2-hydroxy carboxylate + glutathione + H(+). The protein operates within secondary metabolite metabolism; methylglyoxal degradation; (R)-lactate from methylglyoxal: step 2/2. Thiolesterase that catalyzes the hydrolysis of S-D-lactoyl-glutathione to form glutathione and D-lactic acid. This Mannheimia succiniciproducens (strain KCTC 0769BP / MBEL55E) protein is Hydroxyacylglutathione hydrolase.